A 318-amino-acid polypeptide reads, in one-letter code: tRNA-cytidine(32) 2-sulfurtransferase (318 aa).

The PP-loop motif signature appears at 52-57; sequence SGGKDS. Residues cysteine 127, cysteine 130, and cysteine 218 each contribute to the [4Fe-4S] cluster site.

Belongs to the TtcA family. In terms of assembly, homodimer. Requires Mg(2+) as cofactor. The cofactor is [4Fe-4S] cluster.

It is found in the cytoplasm. The enzyme catalyses cytidine(32) in tRNA + S-sulfanyl-L-cysteinyl-[cysteine desulfurase] + AH2 + ATP = 2-thiocytidine(32) in tRNA + L-cysteinyl-[cysteine desulfurase] + A + AMP + diphosphate + H(+). The protein operates within tRNA modification. Catalyzes the ATP-dependent 2-thiolation of cytidine in position 32 of tRNA, to form 2-thiocytidine (s(2)C32). The sulfur atoms are provided by the cysteine/cysteine desulfurase (IscS) system. This chain is tRNA-cytidine(32) 2-sulfurtransferase, found in Actinobacillus pleuropneumoniae serotype 3 (strain JL03).